A 346-amino-acid polypeptide reads, in one-letter code: Angiopoietin-related protein 7 (346 aa).

Residues 1-26 (MLKKPLSAVTWLCIFIVAFVSHPAWL) form the signal peptide. A coiled-coil region spans residues 39 to 119 (QLKAANCCEE…DIMQLQAAQT (81 aa)). N-linked (GlcNAc...) asparagine glycosylation is present at N58. One can recognise a Fibrinogen C-terminal domain in the interval 122 to 343 (QTSADAIYDC…RVEMKIRPED (222 aa)). A disulfide bond links C131 and C162. N253 and N267 each carry an N-linked (GlcNAc...) asparagine glycan. A disulfide bridge connects residues C285 and C298.

As to quaternary structure, homotetramer; disulfide-linked. Highly expressed in the cornea (at protein level). Expression is restricted to the stromal layer. Also detected at the junction between the corneal stromal layer and the conjuctiva. Not detected in the sclera.

The protein resides in the secreted. Functionally, has a role in the formation and organization of the extracellular matrix. In the eye, it functions as a mediator of dexamethasone-induced matrix deposition in the trabecular meshwork, the tissue responsible for the outflow of the ocular aqueous humor and for the maintenance of intraocular pressure. Is a negative regulator of angiogenesis in the cornea, and plays a major role in maintaining corneal avascularity and transparency. The chain is Angiopoietin-related protein 7 (ANGPTL7) from Homo sapiens (Human).